Consider the following 295-residue polypeptide: Ethanolamine ammonia-lyase small subunit (295 aa).

Adenosylcob(III)alamin contacts are provided by valine 209 and glutamate 230.

Belongs to the EutC family. The basic unit is a heterodimer which dimerizes to form tetramers. The heterotetramers trimerize; 6 large subunits form a core ring with 6 small subunits projecting outwards. The cofactor is adenosylcob(III)alamin.

It localises to the bacterial microcompartment. It carries out the reaction ethanolamine = acetaldehyde + NH4(+). It functions in the pathway amine and polyamine degradation; ethanolamine degradation. In terms of biological role, catalyzes the deamination of various vicinal amino-alcohols to oxo compounds. Allows this organism to utilize ethanolamine as the sole source of nitrogen and carbon in the presence of external vitamin B12. This is Ethanolamine ammonia-lyase small subunit from Clostridium perfringens (strain ATCC 13124 / DSM 756 / JCM 1290 / NCIMB 6125 / NCTC 8237 / Type A).